We begin with the raw amino-acid sequence, 210 residues long: Urease accessory protein UreF (210 aa).

The protein belongs to the UreF family. UreD, UreF and UreG form a complex that acts as a GTP-hydrolysis-dependent molecular chaperone, activating the urease apoprotein by helping to assemble the nickel containing metallocenter of UreC. The UreE protein probably delivers the nickel.

Its subcellular location is the cytoplasm. Required for maturation of urease via the functional incorporation of the urease nickel metallocenter. The sequence is that of Urease accessory protein UreF from Cereibacter sphaeroides (strain ATCC 17029 / ATH 2.4.9) (Rhodobacter sphaeroides).